The sequence spans 1029 residues: MDRPHSRGAPPSYSNYDEDPDELRLGPAGNPAAVRLLPASSFDEEIPETRHSRPTHRAYQPSVSSIHSRPSSISNIPSMPPPTESYVSYRETGSPTRPWTPSHVGRSSDEYRRAPPSSVHYERADLNGSPRPGTPSSRYGGSPRRPLPPAPLFAGPGARSSAFADDATVSIPLSDVDDPFGPGSADLGEARGHRGSYAAQSQVTLNEDDDEGSHLRESDIGYDEADAVDEKSAAHYGPAPAEGDQQRRGVREPQKSRKEVQLINGELVLETKIPTILYSFLPRRDADEFTHMRYTAVTCDPDDFVERGYKLRQNIGVTARETELFVCVTMYNENEYDFTRTMHAVMKNISHFCRRSKSRTWGENGWQKIVVCIVSDGREKIHPRTLDALAAMGVYQHGIAKNYVNQKAVQAHVYEYTTQVSLDADLKFKGAEKGIVPCQMLFCLKERNQRKLNSHRWFFNAFGKALNPNVCILLDVGTRPGGNSLYHLWKAFDTDSNVAGACGEIKAMKGRLGQNLLNPLVASQNFEYKMSNILDKPLESVFGYITVLPGALSAYRYHALQNDANGHGPLSQYFKGETLHGQHADVFTANMYLAEDRILCWELVAKRDERWVLKYVKGCTGETDVPDTVPEFISQRRRWLNGAFFAAIYSLVHFRQLWATDHTVARKVLLHIEFVYQLLQVLFTFFSLANFYLTFYFVAGGLADPLIDPFGNRIGLYIFTILRYTLILLICAQFILSLGNRPQGAKKPYFASMVIYGIVMVYTTFAAFYIVIRQLTDPKAKLEMGNNVFTNLIVSMASTIGLYFLMSFIYLDPWHMFTSSIQYFMLLPSYLCTLQVYAFCNTHDVTWGTKGDNVMKTDLGGAVGKGSTVELEMPSEQLDIDSGYDEALRNLRDRIEVPKSGDSEAQMQEDYYKSVRTYMVVSWMIANGILGMAVSEIYSDRTISENYYLRFILWSVASLALFRALGSTTFAIINAVNIAVEGRVRLSLKLPTWLGGSRGSKSAISSSVGSGTSIFTGLGEKITATLRRR.

Disordered regions lie at residues 1–160 (MDRP…GARS), 174–216 (SDVD…SHLR), and 234–257 (AHYG…QKSR). Low complexity predominate over residues 61–77 (PSVSSIHSRPSSISNIP). Basic and acidic residues predominate over residues 244 to 257 (DQQRRGVREPQKSR). Residue Asn-348 is glycosylated (N-linked (GlcNAc...) asparagine). 8 consecutive transmembrane segments (helical) span residues 639 to 659 (WLNG…QLWA), 681 to 701 (VLFT…VAGG), 716 to 736 (LYIF…QFIL), 752 to 772 (SMVI…YIVI), 791 to 811 (NLIV…FIYL), 820 to 840 (SIQY…YAFC), 918 to 938 (YMVV…SEIY), and 952 to 972 (ILWS…TFAI).

Belongs to the chitin synthase family. Class II subfamily.

Its subcellular location is the cell membrane. The catalysed reaction is [(1-&gt;4)-N-acetyl-beta-D-glucosaminyl](n) + UDP-N-acetyl-alpha-D-glucosamine = [(1-&gt;4)-N-acetyl-beta-D-glucosaminyl](n+1) + UDP + H(+). In terms of biological role, polymerizes chitin, a structural polymer of the cell wall and septum, by transferring the sugar moiety of UDP-GlcNAc to the non-reducing end of the growing chitin polymer. Plays an important role in cell wall integrity and has distinct functions in invasive hyphae and vegetative hyphae, but is not involved in plant infection. The protein is Chitin synthase 2 of Pyricularia oryzae (strain 70-15 / ATCC MYA-4617 / FGSC 8958) (Rice blast fungus).